An 878-amino-acid polypeptide reads, in one-letter code: Pyruvate, phosphate dikinase (878 aa).

Residues 1-347 (MKKLIYYFGS…LYILQTRTAK (347 aa)) form an N-terminal region. Residue Arg-96 coordinates ATP. The segment at 348–404 (RTAIAAIKIAVQMVEEKLISKEQALMRIDPESLNQLLHTRIDYSKGLTSIADGLPAS) is linker 1. A central region spans residues 405 to 502 (PGAATGIIVF…ILKQDDIITI (98 aa)). Thr-457 bears the Phosphothreonine; by PDRP1 mark. His-459 serves as the catalytic Tele-phosphohistidine intermediate. A linker 2 region spans residues 503 to 537 (DGGTGKVFLGAVPLIQPTFSEESKLILEWADETSK). The segment at 538–878 (LKIRTNAETV…AAAQAKIKHG (341 aa)) is C-terminal. Positions 565, 621, 749, 770, 771, 772, and 773 each coordinate substrate. Residue Glu-749 participates in Mg(2+) binding. Asp-773 lines the Mg(2+) pocket. Catalysis depends on Cys-835, which acts as the Proton donor.

The protein belongs to the PEP-utilizing enzyme family. Homodimer. The cofactor is Mg(2+). In terms of processing, phosphorylation of Thr-457 in the dark inactivates the enzyme. Dephosphorylation upon light stimulation reactivates the enzyme.

The catalysed reaction is pyruvate + phosphate + ATP = phosphoenolpyruvate + AMP + diphosphate + H(+). With respect to regulation, activated by light-induced dephosphorylation. Inhibited by dark-induced phosphorylation. Both reactions are catalyzed by PDRP1. Catalyzes the reversible phosphorylation of pyruvate and phosphate. In Rickettsia bellii (strain RML369-C), this protein is Pyruvate, phosphate dikinase (ppdK).